The sequence spans 700 residues: Peroxisomal acyl-coenzyme A oxidase 1 (700 aa).

Residues Thr-147, Gly-186, and Cys-412 to Tyr-417 each bind FAD. Residue Glu-437 is the Proton acceptor of the active site. The Microbody targeting signal motif lies at Ser-698–Leu-700.

The protein belongs to the acyl-CoA oxidase family. Requires FAD as cofactor.

It localises to the peroxisome. The enzyme catalyses a 2,3-saturated acyl-CoA + O2 = a (2E)-enoyl-CoA + H2O2. Its function is as follows. Catalyzes the desaturation of acyl-CoAs to 2-trans-enoyl-CoAs. First enzyme of the fatty acid beta-oxidation pathway. In Dictyostelium discoideum (Social amoeba), this protein is Peroxisomal acyl-coenzyme A oxidase 1 (acox1).